Consider the following 135-residue polypeptide: Small ribosomal subunit protein uS11 (135 aa).

It belongs to the universal ribosomal protein uS11 family. As to quaternary structure, part of the 30S ribosomal subunit. Interacts with proteins S7 and S18. Binds to IF-3.

Located on the platform of the 30S subunit, it bridges several disparate RNA helices of the 16S rRNA. Forms part of the Shine-Dalgarno cleft in the 70S ribosome. The polypeptide is Small ribosomal subunit protein uS11 (Cutibacterium acnes (strain DSM 16379 / KPA171202) (Propionibacterium acnes)).